Reading from the N-terminus, the 372-residue chain is MGRKKISIAPITDDRSRSVTFVKRKQGLYKKAYELAVLADCEVAVTVIDRKGRLHVFCSSDYQRTLQQLNTLSIYELKNRSHFSSSPVEESSTVSPETTTGSFTPLNNKHLKSQDQPLSDSQLDTGDSPATSETTVQDYNPQVQSYCRPEPLSSNHVRSCPPFPPTQHHHPHTRPPHHPPHPHFHNNNYPPPYCFQSPVSPGATVPLQHHSPYPSDNGFPGHRRQTHFAPYYYPQRATSPSLKQVPTYLGTHVLQQDQSTYDQKVLMPPASYLSSPNQYTLKNVSPGNPACPPFLYEHPNPQLTPEMFDVKQGSPIPPTAYSGSSCETSQHTIANTPFLAYDRSPSLTNQEAESSFQDVASISPHSLSDVKY.

An MADS-box domain is found at 1–61 (MGRKKISIAP…GRLHVFCSSD (61 aa)). Positions 81 to 187 (SHFSSSPVEE…HPPHPHFHNN (107 aa)) are disordered. The segment covering 84–100 (SSSPVEESSTVSPETTT) has biased composition (low complexity). The span at 114–145 (QDQPLSDSQLDTGDSPATSETTVQDYNPQVQS) shows a compositional bias: polar residues. Residues 167 to 184 (QHHHPHTRPPHHPPHPHF) show a composition bias toward basic residues.

It is found in the nucleus. Its function is as follows. Acts in transcription regulation. May bind to a MEF2-like typee II promoter sequence. This chain is MADS-box transcription factor pvg4 (pvg4), found in Schizosaccharomyces pombe (strain 972 / ATCC 24843) (Fission yeast).